Consider the following 191-residue polypeptide: Elongation factor P (191 aa).

N6-(3,6-diaminohexanoyl)-5-hydroxylysine is present on lysine 34.

It belongs to the elongation factor P family. In terms of processing, may be beta-lysylated on the epsilon-amino group of Lys-34 by the combined action of EpmA and EpmB, and then hydroxylated on the C5 position of the same residue by EpmC (if this protein is present). Lysylation is critical for the stimulatory effect of EF-P on peptide-bond formation. The lysylation moiety may extend toward the peptidyltransferase center and stabilize the terminal 3-CCA end of the tRNA. Hydroxylation of the C5 position on Lys-34 may allow additional potential stabilizing hydrogen-bond interactions with the P-tRNA.

It localises to the cytoplasm. The protein operates within protein biosynthesis; polypeptide chain elongation. In terms of biological role, involved in peptide bond synthesis. Alleviates ribosome stalling that occurs when 3 or more consecutive Pro residues or the sequence PPG is present in a protein, possibly by augmenting the peptidyl transferase activity of the ribosome. Modification of Lys-34 is required for alleviation. This is Elongation factor P from Psychrobacter sp. (strain PRwf-1).